Reading from the N-terminus, the 583-residue chain is 1-deoxy-D-xylulose-5-phosphate synthase (583 aa).

Residues histidine 74 and 115-117 (GHS) each bind thiamine diphosphate. Position 146 (aspartate 146) interacts with Mg(2+). Thiamine diphosphate contacts are provided by residues 147-148 (GG), asparagine 175, phenylalanine 244, and glutamate 327. Residue asparagine 175 participates in Mg(2+) binding.

It belongs to the transketolase family. DXPS subfamily. Homodimer. It depends on Mg(2+) as a cofactor. Thiamine diphosphate serves as cofactor.

The enzyme catalyses D-glyceraldehyde 3-phosphate + pyruvate + H(+) = 1-deoxy-D-xylulose 5-phosphate + CO2. It functions in the pathway metabolic intermediate biosynthesis; 1-deoxy-D-xylulose 5-phosphate biosynthesis; 1-deoxy-D-xylulose 5-phosphate from D-glyceraldehyde 3-phosphate and pyruvate: step 1/1. Catalyzes the acyloin condensation reaction between C atoms 2 and 3 of pyruvate and glyceraldehyde 3-phosphate to yield 1-deoxy-D-xylulose-5-phosphate (DXP). The chain is 1-deoxy-D-xylulose-5-phosphate synthase from Myxococcus xanthus (strain DK1622).